A 294-amino-acid polypeptide reads, in one-letter code: Nucleotide-binding protein CLL_A3342 (294 aa).

Residue 8–15 (GLSGAGKT) coordinates ATP. 59–62 (DIRG) serves as a coordination point for GTP.

Belongs to the RapZ-like family.

Functionally, displays ATPase and GTPase activities. This Clostridium botulinum (strain Eklund 17B / Type B) protein is Nucleotide-binding protein CLL_A3342.